The primary structure comprises 131 residues: Hypocretin neuropeptide precursor (131 aa).

The N-terminal stretch at 1–33 is a signal peptide; sequence MNLPSTKVSWAAVTLLLLLLLLPPALLSSGAAA. Q34 carries the pyrrolidone carboxylic acid modification. 2 disulfide bridges follow: C39-C45 and C40-C47. L66 carries the post-translational modification Leucine amide. M97 is modified (methionine amide). Residues 98–131 constitute a propeptide, removed in mature form; it reads GRRAGAEPAPRPCLGRRCSAPAAASVAPGGQSGI.

Belongs to the orexin family. In terms of processing, specific enzymatic cleavages at paired basic residues yield the different active peptides. In terms of tissue distribution, abundantly expressed in subthalamic nucleus but undetectable in other brain regions tested (hypothalamus was not tested) and in heart, placenta, lung, liver, skeletal muscle, kidney and pancreas.

The protein resides in the rough endoplasmic reticulum. It localises to the cytoplasmic vesicle. It is found in the synapse. Functionally, neuropeptides that play a significant role in the regulation of food intake and sleep-wakefulness, possibly by coordinating the complex behavioral and physiologic responses of these complementary homeostatic functions. A broader role in the homeostatic regulation of energy metabolism, autonomic function, hormonal balance and the regulation of body fluids, is also suggested. Binds to orexin receptors HCRTR1/OX1R and HCRTR2/OX2R with a high affinity. Stimulates food intake. Modulates pituitary luteinizing hormone secretion in an ovarian steroid-dependent manner. In terms of biological role, binds to orexin receptor HCRTR2/OX2R only. Stimulates food intake. Modulates pituitary luteinizing hormone secretion in an ovarian steroid-dependent manner. The protein is Hypocretin neuropeptide precursor of Homo sapiens (Human).